The primary structure comprises 530 residues: Polyprotein pp62 (530 aa).

The protein belongs to the asfivirus polyprotein pp62 family. In terms of assembly, monomer. Predominantly exists as a monomer, with very little dimers. Homodimerization seems to be linked to low pH. As to quaternary structure, homodimer; disulfide-linked. Homotrimer; disulfide-linked. Homohexamer. Post-translationally, monoubiquitinated in vitro by viral UBCv1. In terms of processing, specific enzymatic cleavages in vivo by the viral pS273R protease yield mature proteins.

It localises to the host cytoplasm. The protein localises to the host perinuclear region. It is found in the virion. In terms of biological role, essential for the correct assembly and maturation of the core of the virion. Functionally, component of the core shell. Binds to phosphatidylserine, which may enable the core shell binding with the inner membrane. Its function is as follows. Component of the core shell. Binds to phosphatidylserine and DNA, which may link the core shell to the inner membrane and to the viral nucleoid. Component of the core shell. The protein is Polyprotein pp62 of African swine fever virus (strain Badajoz 1971 Vero-adapted) (Ba71V).